The primary structure comprises 331 residues: Methionyl-tRNA formyltransferase (331 aa).

Residue 110–113 (SLLP) participates in (6S)-5,6,7,8-tetrahydrofolate binding. Residues 312–331 (HAPAERVSAAGSPAGAGGAP) form a disordered region.

Belongs to the Fmt family.

It catalyses the reaction L-methionyl-tRNA(fMet) + (6R)-10-formyltetrahydrofolate = N-formyl-L-methionyl-tRNA(fMet) + (6S)-5,6,7,8-tetrahydrofolate + H(+). Attaches a formyl group to the free amino group of methionyl-tRNA(fMet). The formyl group appears to play a dual role in the initiator identity of N-formylmethionyl-tRNA by promoting its recognition by IF2 and preventing the misappropriation of this tRNA by the elongation apparatus. The sequence is that of Methionyl-tRNA formyltransferase from Frankia alni (strain DSM 45986 / CECT 9034 / ACN14a).